Here is a 297-residue protein sequence, read N- to C-terminus: Bifunctional protein FolD 2 (297 aa).

Residues glycine 173–serine 175, serine 198, and isoleucine 239 each bind NADP(+).

This sequence belongs to the tetrahydrofolate dehydrogenase/cyclohydrolase family. In terms of assembly, homodimer.

The catalysed reaction is (6R)-5,10-methylene-5,6,7,8-tetrahydrofolate + NADP(+) = (6R)-5,10-methenyltetrahydrofolate + NADPH. The enzyme catalyses (6R)-5,10-methenyltetrahydrofolate + H2O = (6R)-10-formyltetrahydrofolate + H(+). It functions in the pathway one-carbon metabolism; tetrahydrofolate interconversion. Functionally, catalyzes the oxidation of 5,10-methylenetetrahydrofolate to 5,10-methenyltetrahydrofolate and then the hydrolysis of 5,10-methenyltetrahydrofolate to 10-formyltetrahydrofolate. The polypeptide is Bifunctional protein FolD 2 (Sinorhizobium medicae (strain WSM419) (Ensifer medicae)).